The sequence spans 209 residues: Uracil phosphoribosyltransferase (209 aa).

5-phospho-alpha-D-ribose 1-diphosphate contacts are provided by residues arginine 79, arginine 104, and 131 to 139 (DPMLATGGS). Residues isoleucine 194 and 199-201 (GDA) contribute to the uracil site. Aspartate 200 contributes to the 5-phospho-alpha-D-ribose 1-diphosphate binding site.

Belongs to the UPRTase family. It depends on Mg(2+) as a cofactor.

It carries out the reaction UMP + diphosphate = 5-phospho-alpha-D-ribose 1-diphosphate + uracil. It functions in the pathway pyrimidine metabolism; UMP biosynthesis via salvage pathway; UMP from uracil: step 1/1. Allosterically activated by GTP. In terms of biological role, catalyzes the conversion of uracil and 5-phospho-alpha-D-ribose 1-diphosphate (PRPP) to UMP and diphosphate. This Alkaliphilus oremlandii (strain OhILAs) (Clostridium oremlandii (strain OhILAs)) protein is Uracil phosphoribosyltransferase.